A 553-amino-acid polypeptide reads, in one-letter code: MSDIALTVSVLALVAVVGLWIGNIKVRGVGFGIGGVLFGGIIVGHFVDQAGVTLSGDMLHFIQEFGLILFVYTIGIQVGPGFFASLRVSGLRLNLFAVLIVIMGGLVTAILHKIFAIPLPVVLGIFSGAVTNTPALGAGQQILRDLGTPVDLVDQMGMSYAMAYPFGICGILLTMWLMRLIFRVNVEAEAQKHESSLANGHSLIQTMNIRVENPNLNNMAIQDVPILNSDKIICSRLKRDDTLMVPSPGTIIQAGDLLHLVGQPTDLHNAQLVIGKEVDTSLSTRGTDLRVERVVVTNEKVLGKRIRDLHFKERYDVVISRLNRAGVELVASSDASLQFGDILNLVGRPASIDAVANVVGNAQQKLQQVQMLPVFIGIGLGVLLGSIPLFVPGFPVALKLGLAGGPLIMALILGRIGSIGKLYWFMPPSANLALRELGIVLFLAVVGLKSGGDFVDTLTQGEGLSWIGYGIFITAIPLITVGLLARIFAKMNYLTLCGMLAGSMTDPPALAFANNLHATSGAAALSYATVYPLVMFLRIITPQLLAVIFWGMG.

Transmembrane regions (helical) follow at residues 4–24 (IALT…IGNI), 28–48 (GVGF…HFVD), 65–85 (FGLI…FFAS), 95–115 (LFAV…HKIF), and 158–178 (MSYA…MWLM). RCK C-terminal domains lie at 192–276 (KHES…VIGK) and 279–361 (DTSL…VVGN). Helical transmembrane passes span 371–391 (MLPV…PLFV), 393–413 (GFPV…ALIL), 437–457 (LGIV…FVDT), 464–484 (LSWI…VGLL), 493–513 (YLTL…LAFA), and 533–553 (LVMF…WGMG).

This sequence belongs to the AAE transporter (TC 2.A.81) family. YidE subfamily.

The protein resides in the cell membrane. In Salmonella heidelberg (strain SL476), this protein is Putative transport protein YidE.